A 35-amino-acid chain; its full sequence is Thaumatin-like protein 6 (35 aa).

Belongs to the thaumatin family.

The chain is Thaumatin-like protein 6 from Glebionis coronaria (Crown daisy).